The following is a 249-amino-acid chain: 5'-nucleotidase SurE 2 (249 aa).

D8, D9, S40, and N90 together coordinate a divalent metal cation.

Belongs to the SurE nucleotidase family. A divalent metal cation is required as a cofactor.

Its subcellular location is the cytoplasm. The enzyme catalyses a ribonucleoside 5'-phosphate + H2O = a ribonucleoside + phosphate. Nucleotidase that shows phosphatase activity on nucleoside 5'-monophosphates. This is 5'-nucleotidase SurE 2 from Pyrobaculum aerophilum (strain ATCC 51768 / DSM 7523 / JCM 9630 / CIP 104966 / NBRC 100827 / IM2).